The primary structure comprises 136 residues: Large ribosomal subunit protein uL16c (136 aa).

The disordered stretch occupies residues 1–20 (MLSPKRTRFRKQHRGRMKGK).

This sequence belongs to the universal ribosomal protein uL16 family. As to quaternary structure, part of the 50S ribosomal subunit.

Its subcellular location is the plastid. It is found in the chloroplast. In Lolium perenne (Perennial ryegrass), this protein is Large ribosomal subunit protein uL16c.